The primary structure comprises 257 residues: UPF0246 protein Sama_0917 (257 aa).

The protein belongs to the UPF0246 family.

The sequence is that of UPF0246 protein Sama_0917 from Shewanella amazonensis (strain ATCC BAA-1098 / SB2B).